We begin with the raw amino-acid sequence, 602 residues long: Elongation factor 4 (602 aa).

One can recognise a tr-type G domain in the interval 7–189 (SQIRNFSIIA…AIVHRIPPPA (183 aa)). Residues 19 to 24 (DHGKST) and 136 to 139 (NKID) each bind GTP.

The protein belongs to the TRAFAC class translation factor GTPase superfamily. Classic translation factor GTPase family. LepA subfamily.

The protein resides in the cell inner membrane. It catalyses the reaction GTP + H2O = GDP + phosphate + H(+). In terms of biological role, required for accurate and efficient protein synthesis under certain stress conditions. May act as a fidelity factor of the translation reaction, by catalyzing a one-codon backward translocation of tRNAs on improperly translocated ribosomes. Back-translocation proceeds from a post-translocation (POST) complex to a pre-translocation (PRE) complex, thus giving elongation factor G a second chance to translocate the tRNAs correctly. Binds to ribosomes in a GTP-dependent manner. The chain is Elongation factor 4 from Gloeobacter violaceus (strain ATCC 29082 / PCC 7421).